The chain runs to 415 residues: L-cysteine:1D-myo-inositol 2-amino-2-deoxy-alpha-D-glucopyranoside ligase (415 aa).

A Zn(2+)-binding site is contributed by Cys43. Residues Cys43–Thr46, Thr58, and Asn81–Thr83 contribute to the L-cysteinyl-5'-AMP site. Positions Ile45–His55 match the 'HIGH' region motif. Positions Glu187–Pro192 match the 'ERGGDP' region motif. Residue Trp227 participates in L-cysteinyl-5'-AMP binding. Zn(2+) is bound at residue Cys231. An L-cysteinyl-5'-AMP-binding site is contributed by Gly249–Asp251. His256 is a Zn(2+) binding site. Ile283 provides a ligand contact to L-cysteinyl-5'-AMP. The 'KMSKS' region motif lies at Lys289–Ser293.

This sequence belongs to the class-I aminoacyl-tRNA synthetase family. MshC subfamily. Monomer. Zn(2+) is required as a cofactor.

The catalysed reaction is 1D-myo-inositol 2-amino-2-deoxy-alpha-D-glucopyranoside + L-cysteine + ATP = 1D-myo-inositol 2-(L-cysteinylamino)-2-deoxy-alpha-D-glucopyranoside + AMP + diphosphate + H(+). Catalyzes the ATP-dependent condensation of GlcN-Ins and L-cysteine to form L-Cys-GlcN-Ins. The chain is L-cysteine:1D-myo-inositol 2-amino-2-deoxy-alpha-D-glucopyranoside ligase from Saccharomonospora viridis (strain ATCC 15386 / DSM 43017 / JCM 3036 / CCUG 5913 / NBRC 12207 / NCIMB 9602 / P101) (Thermoactinomyces viridis).